A 941-amino-acid polypeptide reads, in one-letter code: ATP-dependent 6-phosphofructokinase subunit beta (941 aa).

An N-terminal catalytic PFK domain 1 region spans residues 2–558; it reads PDASLFNGTS…HMKNFISTNS (557 aa). Residues Gly191, 255–256, and 285–288 each bind ATP; these read RC and GDGS. Asp286 contributes to the Mg(2+) binding site. Beta-D-fructose 6-phosphate-binding positions include 331–333, Arg368, and 375–377; these read SID and MGR. The Proton acceptor role is filled by Asp333. ATP contacts are provided by residues Ile395, 400-405, and Gln410; that span reads KPASSR. Beta-D-fructose 6-phosphate contacts are provided by residues Glu432, Arg460, and 466-469; that span reads HVQR. ATP is bound at residue 557–558; sequence NS. The interval 559 to 572 is interdomain linker; it reads ADHVPPSLPLEKRK. Positions 573-941 are C-terminal regulatory PFK domain 2; the sequence is KIAIINVGAP…SDMLSGRTSL (369 aa). Residues Arg643, 701–705, Arg739, 746–748, Glu806, Lys832, 838–841, and Arg918 contribute to the beta-D-fructose 2,6-bisphosphate site; these read TISNN, QGG, and HVQQ.

The protein belongs to the phosphofructokinase type A (PFKA) family. ATP-dependent PFK group I subfamily. Eukaryotic two domain clade 'E' sub-subfamily. As to quaternary structure, heterododecamer of 4 alpha, 4 beta and 4 gamma chains. Mg(2+) is required as a cofactor.

It localises to the cytoplasm. The enzyme catalyses beta-D-fructose 6-phosphate + ATP = beta-D-fructose 1,6-bisphosphate + ADP + H(+). Its pathway is carbohydrate degradation; glycolysis; D-glyceraldehyde 3-phosphate and glycerone phosphate from D-glucose: step 3/4. Its activity is regulated as follows. Allosterically activated by ADP, AMP, or fructose 2,6-bisphosphate, and allosterically inhibited by ATP or citrate. Functionally, catalyzes the phosphorylation of D-fructose 6-phosphate to fructose 1,6-bisphosphate by ATP, the first committing step of glycolysis. The protein is ATP-dependent 6-phosphofructokinase subunit beta (PFK2) of Komagataella pastoris (Yeast).